Consider the following 418-residue polypeptide: Putative O-antigen transporter (418 aa).

The next 11 membrane-spanning stretches (helical) occupy residues V8–L28, F37–L57, F85–V105, L124–G144, I165–F185, L217–F237, V251–I271, L297–V317, L334–I354, I362–V382, and Y385–L405.

It belongs to the polysaccharide synthase family.

It is found in the cell inner membrane. It participates in bacterial outer membrane biogenesis; lipopolysaccharide biosynthesis. In terms of biological role, could be an O-antigen transporter. This chain is Putative O-antigen transporter (rfbE), found in Shigella flexneri.